Reading from the N-terminus, the 69-residue chain is Large ribosomal subunit protein bL31 (69 aa).

The Zn(2+) site is built by C16, C18, C36, and C39.

Belongs to the bacterial ribosomal protein bL31 family. Type A subfamily. In terms of assembly, part of the 50S ribosomal subunit. The cofactor is Zn(2+).

In terms of biological role, binds the 23S rRNA. The polypeptide is Large ribosomal subunit protein bL31 (Kosmotoga olearia (strain ATCC BAA-1733 / DSM 21960 / TBF 19.5.1)).